The following is a 154-amino-acid chain: Protein SprT-like (154 aa).

Positions 6 to 144 constitute a SprT-like domain; sequence LQQLTETISL…CGTCHGKLKF (139 aa). His67 contributes to the Zn(2+) binding site. The active site involves Glu68. His71 contributes to the Zn(2+) binding site.

This sequence belongs to the SprT family. The cofactor is Zn(2+).

Its subcellular location is the cytoplasm. The protein is Protein SprT-like of Shouchella clausii (strain KSM-K16) (Alkalihalobacillus clausii).